A 247-amino-acid polypeptide reads, in one-letter code: Proteasome subunit alpha (247 aa).

Belongs to the peptidase T1A family. As to quaternary structure, the 20S proteasome core is composed of 14 alpha and 14 beta subunits that assemble into four stacked heptameric rings, resulting in a barrel-shaped structure. The two inner rings, each composed of seven catalytic beta subunits, are sandwiched by two outer rings, each composed of seven alpha subunits. The catalytic chamber with the active sites is on the inside of the barrel. Has a gated structure, the ends of the cylinder being occluded by the N-termini of the alpha-subunits. Is capped at one or both ends by the proteasome regulatory ATPase, PAN.

The protein resides in the cytoplasm. The formation of the proteasomal ATPase PAN-20S proteasome complex, via the docking of the C-termini of PAN into the intersubunit pockets in the alpha-rings, triggers opening of the gate for substrate entry. Interconversion between the open-gate and close-gate conformations leads to a dynamic regulation of the 20S proteasome proteolysis activity. Component of the proteasome core, a large protease complex with broad specificity involved in protein degradation. The protein is Proteasome subunit alpha of Methanosarcina acetivorans (strain ATCC 35395 / DSM 2834 / JCM 12185 / C2A).